The chain runs to 269 residues: Phosphatidylglycerol--prolipoprotein diacylglyceryl transferase (269 aa).

Transmembrane regions (helical) follow at residues 10–30 (VALA…LIGI), 56–76 (MVFW…VLFY), 92–112 (WKGG…AWWF), 120–140 (FFEL…AGRI), 174–194 (PSQL…LWLF), 202–222 (MAVS…VEFV), and 237–257 (LTMG…LIWL). Residue R139 coordinates a 1,2-diacyl-sn-glycero-3-phospho-(1'-sn-glycerol).

Belongs to the Lgt family.

It localises to the cell inner membrane. The catalysed reaction is L-cysteinyl-[prolipoprotein] + a 1,2-diacyl-sn-glycero-3-phospho-(1'-sn-glycerol) = an S-1,2-diacyl-sn-glyceryl-L-cysteinyl-[prolipoprotein] + sn-glycerol 1-phosphate + H(+). Its pathway is protein modification; lipoprotein biosynthesis (diacylglyceryl transfer). Functionally, catalyzes the transfer of the diacylglyceryl group from phosphatidylglycerol to the sulfhydryl group of the N-terminal cysteine of a prolipoprotein, the first step in the formation of mature lipoproteins. The protein is Phosphatidylglycerol--prolipoprotein diacylglyceryl transferase of Pseudomonas fluorescens (strain ATCC BAA-477 / NRRL B-23932 / Pf-5).